Reading from the N-terminus, the 120-residue chain is Natriuretic peptide (120 aa).

Positions 1–25 (MVGLSRLADGGLLLVLALLPLALDG) are cleaved as a signal peptide. Positions 26–70 (KPAPLEKAPMAPARIIPYLRPVGKESRAALDRMVPPEDGDSRRLE) are excised as a propeptide. Cys-81 and Cys-97 are disulfide-bonded. A propeptide spanning residues 110–120 (ILPYLRPIRKE) is cleaved from the precursor.

It belongs to the natriuretic peptide family. Expressed by the venom gland.

The protein localises to the secreted. In terms of biological role, natriuretic peptide that dose-dependently induces the rapid relaxation of rat aortic strips phenylephrine-precontracted. Acts by stimulating cGMP production in a dose-dependent manner (by probably activating NPR1 and/or NPR2). May also show potent hypotensive effects. This chain is Natriuretic peptide, found in Micrurus altirostris (Uruguayan coral snake).